The following is a 421-amino-acid chain: Trimethyllysine dioxygenase, mitochondrial (421 aa).

The N-terminal 15 residues, 1-15 (MWYHRLSHLHSRLQD), are a transit peptide targeting the mitochondrion. An N6-acetyllysine mark is found at Lys-179 and Lys-236. Residues His-242, Asp-244, and His-389 each coordinate Fe cation.

This sequence belongs to the gamma-BBH/TMLD family. As to quaternary structure, homodimer. The cofactor is Fe(2+). L-ascorbate is required as a cofactor. As to expression, all isoforms, but isoform 8, are widely expressed in adult and fetal tissues. Isoform 8 is restricted to heart and skeletal muscle.

It is found in the mitochondrion matrix. It carries out the reaction N(6),N(6),N(6)-trimethyl-L-lysine + 2-oxoglutarate + O2 = (3S)-3-hydroxy-N(6),N(6),N(6)-trimethyl-L-lysine + succinate + CO2. Its pathway is amine and polyamine biosynthesis; carnitine biosynthesis. In terms of biological role, converts trimethyllysine (TML) into hydroxytrimethyllysine (HTML). This Homo sapiens (Human) protein is Trimethyllysine dioxygenase, mitochondrial (TMLHE).